Here is a 198-residue protein sequence, read N- to C-terminus: Glycerol-3-phosphate acyltransferase (198 aa).

5 helical membrane passes run 2 to 22 (FITYLLLIVAYLLGSIPFALV), 53 to 75 (AGFIVTIADILKGTLATGLPLIF), 79 to 98 (IHPLLFGLAAVLGHVYPIFA), 113 to 133 (LLCYAPIIFAILAVVFFTLLF), and 147 to 167 (IAAVIASIVNGDKIFIVAMCL).

The protein belongs to the PlsY family. Probably interacts with PlsX.

It is found in the cell membrane. The enzyme catalyses an acyl phosphate + sn-glycerol 3-phosphate = a 1-acyl-sn-glycero-3-phosphate + phosphate. The protein operates within lipid metabolism; phospholipid metabolism. Catalyzes the transfer of an acyl group from acyl-phosphate (acyl-PO(4)) to glycerol-3-phosphate (G3P) to form lysophosphatidic acid (LPA). This enzyme utilizes acyl-phosphate as fatty acyl donor, but not acyl-CoA or acyl-ACP. This is Glycerol-3-phosphate acyltransferase from Bacillus cytotoxicus (strain DSM 22905 / CIP 110041 / 391-98 / NVH 391-98).